The chain runs to 59 residues: Toxin TxpA (59 aa).

The chain crosses the membrane as a helical span at residues 7-27 (LMVMIGFANLIGGIMTWVISL).

Its subcellular location is the cell membrane. Its function is as follows. Toxic component of a type I toxin-antitoxin (TA) system. Overexpression of txpA causes cell lysis; the TxpA protein has been suggested to act on the cell membrane or might possibly block cell wall synthesis. Overexpression in E.coli is not toxic. The polypeptide is Toxin TxpA (Bacillus subtilis (strain 168)).